Here is a 714-residue protein sequence, read N- to C-terminus: Hormonally up-regulated neu tumor-associated kinase (714 aa).

The span at 1 to 15 (MPAAAGDGLLGEPAA) shows a compositional bias: low complexity. The disordered stretch occupies residues 1–26 (MPAAAGDGLLGEPAAPGGGGGAEDAA). The region spanning 62–320 (LIGSRKLGEG…IQQALANRWL (259 aa)) is the Protein kinase domain. ATP is bound by residues 68 to 76 (LGEGSFAKV) and Lys91. The active-site Proton acceptor is the Asp186. Over residues 437-461 (KKPKEQEKRGDFLHRPFSKKLDKNL) the composition is skewed to basic and acidic residues. Disordered stretches follow at residues 437 to 471 (KKPK…SGSL), 518 to 552 (MEFI…HKED), and 590 to 660 (ARRN…VKSR). Residues 599–611 (LSPGLPSGSMSPL) are compositionally biased toward low complexity. Positions 623 to 635 (AHEDKNSPPKEEG) are enriched in basic and acidic residues.

Belongs to the protein kinase superfamily. CAMK Ser/Thr protein kinase family. SNF1 subfamily.

The enzyme catalyses L-seryl-[protein] + ATP = O-phospho-L-seryl-[protein] + ADP + H(+). It carries out the reaction L-threonyl-[protein] + ATP = O-phospho-L-threonyl-[protein] + ADP + H(+). The sequence is that of Hormonally up-regulated neu tumor-associated kinase (HUNK) from Pan troglodytes (Chimpanzee).